A 122-amino-acid polypeptide reads, in one-letter code: Ribonuclease P protein component (122 aa).

This sequence belongs to the RnpA family. Consists of a catalytic RNA component (M1 or rnpB) and a protein subunit.

It catalyses the reaction Endonucleolytic cleavage of RNA, removing 5'-extranucleotides from tRNA precursor.. Its function is as follows. RNaseP catalyzes the removal of the 5'-leader sequence from pre-tRNA to produce the mature 5'-terminus. It can also cleave other RNA substrates such as 4.5S RNA. The protein component plays an auxiliary but essential role in vivo by binding to the 5'-leader sequence and broadening the substrate specificity of the ribozyme. The protein is Ribonuclease P protein component of Lactobacillus johnsonii (strain CNCM I-12250 / La1 / NCC 533).